A 166-amino-acid polypeptide reads, in one-letter code: T-cell surface glycoprotein CD3 zeta chain (166 aa).

The signal sequence occupies residues 1-21 (MKWTALVIVAVLQTQFPVTAA). At 22–30 (QSFGLLDPK) the chain is on the extracellular side. A helical transmembrane segment spans residues 31–51 (LCYLLDGILFIYGVIVTALFL). The Cytoplasmic portion of the chain corresponds to 52–166 (RAKFSRSADA…ALHMQALPPR (115 aa)). Residue Ser58 is modified to Phosphoserine. ITAM domains are found at residues 61–89 (APAYQHGQNPVYNELNVGRREEYAVLDRR), 100–128 (PQRKKNPHEVVYNELRKDKMAEAYSEIGM), and 133–161 (QRRRGKGHDGVYQGLSTATKDTYDALHMQ). Phosphotyrosine is present on residues Tyr64, Tyr72, Tyr83, Tyr111, Tyr123, Tyr144, and Tyr155. Positions 126 to 156 (IGMKSDNQRRRGKGHDGVYQGLSTATKDTYD) are disordered.

Belongs to the CD3Z/FCER1G family. The TCR-CD3 complex is composed of a CD3D/CD3E and a CD3G/CD3E heterodimers that preferentially associate with TCRalpha and TCRbeta, respectively, to form TCRalpha/CD3E/CD3G and TCRbeta/CD3G/CD3E trimers. In turn, the hexamer interacts with CD3Z homodimer to form the TCR-CD3 complex. Alternatively, TCRalpha and TCRbeta can be replaced by TCRgamma and TCRdelta. Interacts with SLA. Interacts with TRAT1. Interacts with DOCK2. Interacts with SLA2. Interacts with SHB. Interacts with ZAP70. Interacts (tyrosine phosphorylated) with SHC1 (via SH2 domain). Interacts with PTPRC. Interacts with CRK; this interaction regulates CD3Z phosphorylation. Interacts (on T cell side) with CD81, ICAM1 and CD9 at immunological synapses between antigen-presenting cells and T cells. Interacts with CD160. Interacts with LY6E. Interacts with LY6E. The signaling subunit of immunoglobulin gamma (IgG) Fc receptor complex. As a homodimer or a heterodimer with FCER1G, associates with the ligand binding subunit FCGR3A (via transmembrane domain); this interaction is a prerequisite for Fc receptor complex expression on the cell surface. Interacts with CD5. Post-translationally, phosphorylated on Tyr residues after T-cell receptor triggering by LCK in association with CD4/CD8.

Its subcellular location is the cell membrane. Part of the TCR-CD3 complex present on T-lymphocyte cell surface that plays an essential role in adaptive immune response. When antigen presenting cells (APCs) activate T-cell receptor (TCR), TCR-mediated signals are transmitted across the cell membrane by the CD3 chains CD3D, CD3E, CD3G and CD3Z. All CD3 chains contain immunoreceptor tyrosine-based activation motifs (ITAMs) in their cytoplasmic domain. Upon TCR engagement, these motifs become phosphorylated by Src family protein tyrosine kinases LCK and FYN, resulting in the activation of downstream signaling pathways. CD3Z ITAMs phosphorylation creates multiple docking sites for the protein kinase ZAP70 leading to ZAP70 phosphorylation and its conversion into a catalytically active enzyme. Plays an important role in intrathymic T-cell differentiation. Additionally, participates in the activity-dependent synapse formation of retinal ganglion cells (RGCs) in both the retina and dorsal lateral geniculate nucleus (dLGN). The sequence is that of T-cell surface glycoprotein CD3 zeta chain (CD247) from Ovis aries (Sheep).